A 95-amino-acid polypeptide reads, in one-letter code: Glycophorin-C (95 aa).

Residues 1–25 (MSSPVRTPPPERLEPNPGMSYAVME) are Extracellular-facing. Residues 26-46 (IAIIAAVITAVALVLVCLLFL) form a helical; Signal-anchor for type III membrane protein membrane-spanning segment. Topologically, residues 47–95 (MLRYLYRHKGTYYTNEAKGTEFAESADAALQSDPALQDAGDTSKKEYFI) are cytoplasmic. Phosphoserine occurs at positions 71, 78, and 89.

Belongs to the glycophorin-C family.

The protein localises to the cell membrane. The protein is Glycophorin-C (Gypc) of Rattus norvegicus (Rat).